We begin with the raw amino-acid sequence, 360 residues long: Phosphoserine aminotransferase (360 aa).

R41 lines the L-glutamate pocket. Residues 75–76 (GR), W101, T152, D172, and Q195 each bind pyridoxal 5'-phosphate. K196 bears the N6-(pyridoxal phosphate)lysine mark. 237–238 (NT) lines the pyridoxal 5'-phosphate pocket.

Belongs to the class-V pyridoxal-phosphate-dependent aminotransferase family. SerC subfamily. In terms of assembly, homodimer. Pyridoxal 5'-phosphate is required as a cofactor.

The protein resides in the cytoplasm. It catalyses the reaction O-phospho-L-serine + 2-oxoglutarate = 3-phosphooxypyruvate + L-glutamate. It carries out the reaction 4-(phosphooxy)-L-threonine + 2-oxoglutarate = (R)-3-hydroxy-2-oxo-4-phosphooxybutanoate + L-glutamate. The protein operates within amino-acid biosynthesis; L-serine biosynthesis; L-serine from 3-phospho-D-glycerate: step 2/3. It participates in cofactor biosynthesis; pyridoxine 5'-phosphate biosynthesis; pyridoxine 5'-phosphate from D-erythrose 4-phosphate: step 3/5. Catalyzes the reversible conversion of 3-phosphohydroxypyruvate to phosphoserine and of 3-hydroxy-2-oxo-4-phosphonooxybutanoate to phosphohydroxythreonine. The sequence is that of Phosphoserine aminotransferase from Pseudoalteromonas translucida (strain TAC 125).